We begin with the raw amino-acid sequence, 331 residues long: WW domain-containing protein C2F3.14c (331 aa).

A disordered region spans residues M1–I184. The segment covering A9–V22 has biased composition (polar residues). Positions N23–N41 are enriched in low complexity. Residues S57–A89 are compositionally biased toward polar residues. The segment covering R105 to P145 has biased composition (pro residues). Over residues S158–I184 the composition is skewed to polar residues. A WW domain is found at S187 to E220. Residues Y290–K309 are disordered. Basic and acidic residues predominate over residues R292–K309.

It localises to the nucleus. This Schizosaccharomyces pombe (strain 972 / ATCC 24843) (Fission yeast) protein is WW domain-containing protein C2F3.14c.